The following is a 1506-amino-acid chain: Transient receptor potential cation channel subfamily M member 2 (1506 aa).

The segment covering 1–11 (MESLDRRRTGS) has biased composition (basic and acidic residues). A disordered region spans residues 1–22 (MESLDRRRTGSEQEEGFGVQSR). Residues 1–750 (MESLDRRRTG…WWGQLCVDNG (750 aa)) lie on the Cytoplasmic side of the membrane. Positions 173, 178, 301, 332, and 335 each coordinate ADP-D-ribose. T738 is subject to Phosphothreonine. An intramembrane segment occupies 751-767 (LWRIILCMLAFPLLFTG). The Cytoplasmic portion of the chain corresponds to 768-792 (FISFREKRLQALCRPARVRAFFNAP). Residues 793–813 (VVIFHMNILSYFAFLCLFAYV) form a helical membrane-spanning segment. Topologically, residues 814 to 824 (LMVDFQPSPSW) are extracellular. Residues 825–845 (CEYLIYLWLFSLVCEETRQLF) form a helical membrane-spanning segment. The Ca(2+) site is built by E840 and Q843. The Cytoplasmic portion of the chain corresponds to 846–864 (YDPDGCGLMKMASLYFSDF). Residues 865–885 (WNKLDVGAILLFIVGLTCRLI) traverse the membrane as a helical segment. N866 is a binding site for Ca(2+). Residues 886 to 893 (PATLYPGR) are Extracellular-facing. The helical transmembrane segment at 894–914 (IILSLDFIMFCLRLMHIFTIS) threads the bilayer. Residues 915–926 (KTLGPKIIIVKR) lie on the Cytoplasmic side of the membrane. The chain crosses the membrane as a helical span at residues 927-947 (MMKDVFFFLFLLAVWVVSFGV). Topologically, residues 948–967 (AKQAILIHNESRVDWIFRGV) are extracellular. An intramembrane region (pore-forming) is located at residues 968-982 (VYHSYLTIFGQIPTY). The short motif at 976–979 (FGQI) is the Selectivity filter element. Residues 983 to 1019 (IDGVNFSMDQCSPNGTDPYKPKCPESDWTGQAPAFPE) lie on the Extracellular side of the membrane. A disulfide bridge connects residues C993 and C1005. A helical membrane pass occupies residues 1020–1041 (WLTVTLLCLYLLFANILLLNLL). The Cytoplasmic portion of the chain corresponds to 1042–1076 (IAMFNYTFQEVQEHTDQIWKFQRHDLIEEYHGRPP). E1070 lines the Ca(2+) pocket. Residues 1077-1095 (APPPLILLSHLQLLIKRIV) lie within the membrane without spanning it. Residues 1096–1506 (LKIPAKRHKQ…KVASLFGAHF (411 aa)) are Cytoplasmic-facing. Positions 1350–1501 (RWKRNQGGAI…KTILQKVASL (152 aa)) constitute a Nudix hydrolase domain. ADP-D-ribose is bound at residue S1378. The Nudix box motif lies at 1386-1407 (GSREPGEMLPRKLKRVLRQEFW). Positions 1427, 1429, 1488, and 1490 each coordinate ADP-D-ribose.

Belongs to the transient receptor (TC 1.A.4) family. LTrpC subfamily. TRPM2 sub-subfamily. Homotetramer. In terms of processing, protein kinase C (PKC)-mediated phosphorylation of TRPM2 at Thr-738 counteracts the effect of cytosolic Ca(2+) and elevates the temperature threshold. Detected in the preoptic area of the hypothalamus, a brain area involved in body temperature control. Detected in beta-cells in pancreas islets (at protein level). Detected in brain cortex, striatum, hippocampus CA1, CA2 and CA3 layers, and in the Purkinje cell layer in cerebellum. Widely expressed, with highest levels in lung, spleen, eye and brain. Detected in dendritic cells and in polymorphonuclear neutrophils.

Its subcellular location is the cell membrane. The protein localises to the perikaryon. The protein resides in the cell projection. It localises to the cytoplasmic vesicle. It is found in the lysosome. The catalysed reaction is Ca(2+)(in) = Ca(2+)(out). It carries out the reaction Na(+)(in) = Na(+)(out). With respect to regulation, activated by intracellular ADP-ribose, beta-NAD (NAD(+)) and similar compounds, and by oxidative stress caused by reactive oxygen or nitrogen species. Ca(2+) and PI(4,5)P2 are required for channel opening by ADP-ribose. Activated by moderate heat (35 to 40 degrees Celsius). Activation by ADP-ribose and beta-NAD is strongly increased by moderate heat (35 to 40 degrees Celsius). Likewise, reactive oxygen species lower the threshold for activation by moderate heat (37 degrees Celsius). Inactivated by exposure to extracellular pH between 4.0 and 6.5; irreversibly inactivated when open channels are exposed to extracellular pH between 4.0 and 6.5, while pre-exposure of closed channels to extracellular pH 5.5 gives rise to currents that rapidly inactivate, but protects against irreversible inactivation. Inactivated by intracellular ATP. Activated by arachidonic acid. Inhibited by 2-aminoethyl diphenylborinate (2-APB). Its function is as follows. Nonselective, voltage-independent cation channel that mediates Na(+) and Ca(2+) influx, leading to increased cytoplasmic Ca(2+) levels. Functions as a ligand-gated ion channel, gated by intracellular adenosine diphosphate ribose (ADP-ribose), Ca(2+), warm temperature, and oxidative stress. The precise physiological activators are under debate; the true, physiological activators may be ADP-ribose and ADP-ribose-2'-phosphate. Binding of ADP-ribose to the cytoplasmic Nudix domain causes a conformation change; the channel is primed but still requires Ca(2+) binding to trigger channel opening. Extracellular Ca(2+) passes through the channel and increases channel activity. Also contributes to Ca(2+) release from intracellular stores in response to ADP-ribose. Plays a role in numerous processes that involve signaling via intracellular Ca(2+) levels. Besides, mediates the release of lysosomal Zn(2+) stores in response to reactive oxygen species, leading to increased cytosolic Zn(2+) levels. Plays a role in mediating behavorial and physiological responses to moderate heat and thereby contributes to body temperature homeostasis. Plays a role in insulin secretion, a process that requires increased cytoplasmic Ca(2+) levels. Required for normal IFNG and cytokine secretion and normal innate immune immunity in response to bacterial infection. Required for normal phagocytosis and cytokine release by macrophages exposed to zymosan (in vitro). Plays a role in dendritic cell differentiation and maturation, and in dendritic cell chemotaxis via its role in regulating cytoplasmic Ca(2+) levels. Plays a role in the regulation of the reorganization of the actin cytoskeleton and filopodia formation in response to reactive oxygen species via its function in increasing cytoplasmic Ca(2+) and Zn(2+) levels. Confers susceptibility to cell death following oxidative stress. The protein is Transient receptor potential cation channel subfamily M member 2 (Trpm2) of Mus musculus (Mouse).